The sequence spans 160 residues: 17.9 kDa class II heat shock protein (160 aa).

A sHSP domain is found at 44 to 160 (DARAMAATPA…KPKTIQVQVA (117 aa)).

The protein belongs to the small heat shock protein (HSP20) family.

Its subcellular location is the cytoplasm. The sequence is that of 17.9 kDa class II heat shock protein (HSP17.9) from Helianthus annuus (Common sunflower).